A 616-amino-acid polypeptide reads, in one-letter code: Replication protein A 70 kDa DNA-binding subunit (616 aa).

An N-acetylmethionine modification is found at M1. Glycyl lysine isopeptide (Lys-Gly) (interchain with G-Cter in ubiquitin) cross-links involve residues K22 and K88. A disordered region spans residues 121 to 154 (GLGQPQVAPPAPAASPAASSRPQPQNGSSGMGST). Low complexity predominate over residues 134–145 (ASPAASSRPQPQ). Residues K163 and K167 each carry the N6-acetyllysine; alternate modification. Residues K163 and K167 each participate in a glycyl lysine isopeptide (Lys-Gly) (interchain with G-Cter in ubiquitin); alternate cross-link. T180 carries the phosphothreonine modification. Residue K183 forms a Glycyl lysine isopeptide (Lys-Gly) (interchain with G-Cter in ubiquitin) linkage. At T191 the chain carries Phosphothreonine. The OB DNA-binding region spans 197–281 (WTICARVTNK…VKNDYEMTFN (85 aa)). Glycyl lysine isopeptide (Lys-Gly) (interchain with G-Cter in ubiquitin) cross-links involve residues K220 and K244. N6-acetyllysine; alternate is present on K259. Residue K259 forms a Glycyl lysine isopeptide (Lys-Gly) (interchain with G-Cter in ubiquitin); alternate linkage. Residues K267 and K331 each participate in a glycyl lysine isopeptide (Lys-Gly) (interchain with G-Cter in ubiquitin) cross-link. S384 carries the post-translational modification Phosphoserine. Residues K410 and K431 each participate in a glycyl lysine isopeptide (Lys-Gly) (interchain with G-Cter in ubiquitin) cross-link. K449 participates in a covalent cross-link: Glycyl lysine isopeptide (Lys-Gly) (interchain with G-Cter in SUMO). A Glycyl lysine isopeptide (Lys-Gly) (interchain with G-Cter in ubiquitin) cross-link involves residue K458. The C4-type zinc finger occupies 481 to 503 (CPTQDCNKKVIDQQNGLYRCEKC). Residue K553 forms a Glycyl lysine isopeptide (Lys-Gly) (interchain with G-Cter in ubiquitin) linkage. Residue K577 forms a Glycyl lysine isopeptide (Lys-Gly) (interchain with G-Cter in SUMO) linkage.

This sequence belongs to the replication factor A protein 1 family. As to quaternary structure, component of the canonical replication protein A complex (RPA), a heterotrimer composed of RPA1, RPA2 and RPA3. Also a component of the aRPA, the alternative replication protein A complex, a trimeric complex similar to the replication protein A complex/RPA but where RPA1 and RPA3 are associated with RPA4 instead of RPA2. The DNA-binding activity may reside exclusively on the RPA1 subunit. Interacts with PRPF19; the PRP19-CDC5L complex is recruited to the sites of DNA repair where it ubiquitinates the replication protein A complex (RPA). Interacts with RIPK1. Interacts with the polymerase alpha subunit POLA1/p180; this interaction stabilizes the replicative complex and reduces the misincorporation rate of DNA polymerase alpha by acting as a fidelity clamp. Interacts with RAD51 and SENP6 to regulate DNA repair. Interacts with HELB; this interaction promotes HELB recruitment to chromatin following DNA damage. Interacts with PRIMPOL; leading to recruit PRIMPOL on chromatin and stimulate its DNA primase activity. Interacts with XPA; the interaction is direct and associates XPA with the RPA complex. Interacts with ETAA1; the interaction is direct and promotes ETAA1 recruitment at stalled replication forks. Interacts with RPA1; this interaction associates HROB with the RPA complex. Interacts (when poly-ADP-ribosylated) with HTATSF1. Interacts with BRIP1/FANCJ via this RPA1 subunit; following DNA damage they colocalize in foci in the nucleus. Post-translationally, DNA damage-induced 'Lys-63'-linked polyubiquitination by PRPF19 mediates ATRIP recruitment to the RPA complex at sites of DNA damage and activation of ATR. Ubiquitinated by RFWD3 at stalled replication forks in response to DNA damage: ubiquitination by RFWD3 does not lead to degradation by the proteasome and promotes removal of the RPA complex from stalled replication forks, promoting homologous recombination. In terms of processing, sumoylated on lysine residues Lys-449 and Lys-577, with Lys-449 being the major site. Sumoylation promotes recruitment of RAD51 to the DNA damage foci to initiate DNA repair through homologous recombination. Desumoylated by SENP6. Poly-ADP-ribosylated by PARP1; promoting recruitment of HTATSF1.

Its subcellular location is the nucleus. The protein localises to the PML body. As part of the heterotrimeric replication protein A complex (RPA/RP-A), binds and stabilizes single-stranded DNA intermediates that form during DNA replication or upon DNA stress. It prevents their reannealing and in parallel, recruits and activates different proteins and complexes involved in DNA metabolism. Thereby, it plays an essential role both in DNA replication and the cellular response to DNA damage. In the cellular response to DNA damage, the RPA complex controls DNA repair and DNA damage checkpoint activation. Through recruitment of ATRIP activates the ATR kinase a master regulator of the DNA damage response. It is required for the recruitment of the DNA double-strand break repair factors RAD51 and RAD52 to chromatin in response to DNA damage. Also recruits to sites of DNA damage proteins like XPA and XPG that are involved in nucleotide excision repair and is required for this mechanism of DNA repair. Also plays a role in base excision repair (BER) probably through interaction with UNG. Also recruits SMARCAL1/HARP, which is involved in replication fork restart, to sites of DNA damage. Plays a role in telomere maintenance. As part of the alternative replication protein A complex, aRPA, binds single-stranded DNA and probably plays a role in DNA repair. Compared to the RPA2-containing, canonical RPA complex, may not support chromosomal DNA replication and cell cycle progression through S-phase. The aRPA may not promote efficient priming by DNA polymerase alpha but could support DNA synthesis by polymerase delta in presence of PCNA and replication factor C (RFC), the dual incision/excision reaction of nucleotide excision repair and RAD51-dependent strand exchange. RPA stimulates 5'-3' helicase activity of the BRIP1/FANCJ. The protein is Replication protein A 70 kDa DNA-binding subunit (RPA1) of Homo sapiens (Human).